Reading from the N-terminus, the 432-residue chain is N-acylneuraminate cytidylyltransferase (432 aa).

Met-1 is modified (N-acetylmethionine). The tract at residues 1-38 (MDALEKGAVTSGPAPRGRPSRGRPPKLQRSRGAGRGLE) is disordered. Positions 15 to 31 (PRGRPSRGRPPKLQRSR) match the BC1 motif motif. Positions 18-29 (RPSRGRPPKLQR) are enriched in basic residues. 2 positions are modified to omega-N-methylarginine: Arg-35 and Arg-50. Arg-50, Asn-60, Arg-109, Ser-118, Ser-120, and Gln-141 together coordinate substrate. The BC2 motif signature appears at 198–204 (KRPRRQD). The active site involves Arg-199. The BC3 motif motif lies at 267 to 274 (KEKLKEIK).

Belongs to the CMP-NeuNAc synthase family. In terms of assembly, homotetramer; the active enzyme is formed by a dimer of dimers. As to expression, highly expressed in brain and heart, and at intermediate level muscle and liver.

The protein resides in the nucleus. It catalyses the reaction an N-acylneuraminate + CTP = a CMP-N-acyl-beta-neuraminate + diphosphate. It functions in the pathway amino-sugar metabolism; N-acetylneuraminate metabolism. In terms of biological role, catalyzes the activation of N-acetylneuraminic acid (NeuNAc) to cytidine 5'-monophosphate N-acetylneuraminic acid (CMP-NeuNAc), a substrate required for the addition of sialic acid. Has some activity toward NeuNAc, N-glycolylneuraminic acid (Neu5Gc) or 2-keto-3-deoxy-D-glycero-D-galacto-nononic acid (KDN). The polypeptide is N-acylneuraminate cytidylyltransferase (Cmas) (Mus musculus (Mouse)).